The sequence spans 237 residues: 4-hydroxy-tetrahydrodipicolinate reductase (237 aa).

Residues 11–16, 92–94, and 116–119 contribute to the NAD(+) site; these read GASGRM, GTT, and GSNF. The active-site Proton donor/acceptor is the histidine 148. (S)-2,3,4,5-tetrahydrodipicolinate is bound at residue histidine 149. The Proton donor role is filled by lysine 152. Position 158-159 (158-159) interacts with (S)-2,3,4,5-tetrahydrodipicolinate; the sequence is GS.

The protein belongs to the DapB family.

The protein localises to the cytoplasm. The enzyme catalyses (S)-2,3,4,5-tetrahydrodipicolinate + NAD(+) + H2O = (2S,4S)-4-hydroxy-2,3,4,5-tetrahydrodipicolinate + NADH + H(+). It carries out the reaction (S)-2,3,4,5-tetrahydrodipicolinate + NADP(+) + H2O = (2S,4S)-4-hydroxy-2,3,4,5-tetrahydrodipicolinate + NADPH + H(+). The protein operates within amino-acid biosynthesis; L-lysine biosynthesis via DAP pathway; (S)-tetrahydrodipicolinate from L-aspartate: step 4/4. Catalyzes the conversion of 4-hydroxy-tetrahydrodipicolinate (HTPA) to tetrahydrodipicolinate. In Xylella fastidiosa (strain M12), this protein is 4-hydroxy-tetrahydrodipicolinate reductase.